Consider the following 315-residue polypeptide: Glutaminase (315 aa).

Residues S70, N120, E166, N173, Y197, Y249, and V267 each contribute to the substrate site.

Belongs to the glutaminase family. In terms of assembly, homotetramer.

It carries out the reaction L-glutamine + H2O = L-glutamate + NH4(+). The protein is Glutaminase of Rhizobium meliloti (strain 1021) (Ensifer meliloti).